A 374-amino-acid chain; its full sequence is Chorismate synthase (374 aa).

An NADP(+)-binding site is contributed by Arg55. Residues 132-134 (RGS), Gly293, 308-312 (KPTPS), and Arg335 contribute to the FMN site.

Belongs to the chorismate synthase family. It depends on FMNH2 as a cofactor.

It carries out the reaction 5-O-(1-carboxyvinyl)-3-phosphoshikimate = chorismate + phosphate. It functions in the pathway metabolic intermediate biosynthesis; chorismate biosynthesis; chorismate from D-erythrose 4-phosphate and phosphoenolpyruvate: step 7/7. In terms of biological role, catalyzes the anti-1,4-elimination of the C-3 phosphate and the C-6 proR hydrogen from 5-enolpyruvylshikimate-3-phosphate (EPSP) to yield chorismate, which is the branch point compound that serves as the starting substrate for the three terminal pathways of aromatic amino acid biosynthesis. This reaction introduces a second double bond into the aromatic ring system. The protein is Chorismate synthase of Methanothermobacter thermautotrophicus (strain ATCC 29096 / DSM 1053 / JCM 10044 / NBRC 100330 / Delta H) (Methanobacterium thermoautotrophicum).